The sequence spans 353 residues: 2-Hydroxyacid oxidase 2 (353 aa).

The FMN hydroxy acid dehydrogenase domain occupies 2–353 (PLVCLADFKA…SPDLIQFSRL (352 aa)). Residues 77–79 (PTA), S106, and Q128 contribute to the FMN site. Y130 provides a ligand contact to a 2-oxocarboxylate. S133 is modified (phosphoserine). T156 lines the FMN pocket. Residue R165 coordinates a 2-oxocarboxylate. K224 is a binding site for FMN. H248 acts as the Proton acceptor in catalysis. An a 2-oxocarboxylate-binding site is contributed by R251. FMN-binding positions include 279–283 (DGGVR) and 302–303 (GR). The short motif at 351–353 (SRL) is the Microbody targeting signal element.

The protein belongs to the FMN-dependent alpha-hydroxy acid dehydrogenase family. Homotetramer. Could also form homooctamer. It depends on FMN as a cofactor. In terms of tissue distribution, expressed in kidney.

The protein resides in the peroxisome. The catalysed reaction is a (2S)-2-hydroxycarboxylate + O2 = a 2-oxocarboxylate + H2O2. It carries out the reaction 2-hydroxyoctanoate + O2 = 2-oxooctanoate + H2O2. The enzyme catalyses 2-hydroxyhexadecanoate + O2 = 2-oxohexadecanoate + H2O2. It catalyses the reaction 2-hydroxyhexanoate + O2 = 2-oxohexanoate + H2O2. The catalysed reaction is mandelate + O2 = phenylglyoxylate + H2O2. Is inhibited in vitro by CCPST (4-carboxy-5-(4-chlorophenyl)sulfanyl-1,2,3-thiadiazole). Its function is as follows. Oxidase that catalyzes the oxidation of medium and long chain hydroxyacids such as 2-hydroxyhexadecanoate, 2-hydroxyoctanoate, 2-hydroxyhexanoate and 2-hydroxybutanoate, to the correspondong 2-oxoacids. Its role in the oxidation of 2-hydroxy fatty acids may contribute to the general pathway of fatty acid alpha-oxidation. Can also use mandelate as substrate. Active in vitro with the artificial electron acceptor 2,6-dichlorophenolindophenol (DCIP), but O2 is believed to be the physiological electron acceptor, leading to the production of H2O2. The protein is 2-Hydroxyacid oxidase 2 (Hao2) of Rattus norvegicus (Rat).